Here is a 211-residue protein sequence, read N- to C-terminus: Ion-translocating oxidoreductase complex subunit G (211 aa).

Residues 9–29 (GLTLAIFACATTGLVALTQYL) traverse the membrane as a helical segment. Thr175 is subject to FMN phosphoryl threonine.

This sequence belongs to the RnfG family. As to quaternary structure, the complex is composed of six subunits: RnfA, RnfB, RnfC, RnfD, RnfE and RnfG. FMN serves as cofactor.

It localises to the cell inner membrane. Its function is as follows. Part of a membrane-bound complex that couples electron transfer with translocation of ions across the membrane. This Vibrio parahaemolyticus serotype O3:K6 (strain RIMD 2210633) protein is Ion-translocating oxidoreductase complex subunit G.